We begin with the raw amino-acid sequence, 438 residues long: Coenzyme A disulfide reductase (438 aa).

8-33 (GAVAGGATCASQIRRLDKESDIIIFE) lines the FAD pocket. Substrate contacts are provided by threonine 15, glutamine 19, arginine 22, serine 39, and asparagine 42. The active-site Nucleophile is the cysteine 43. Catalysis depends on cysteine 43, which acts as the Redox-active. Lysine 71 lines the substrate pocket. 151–166 (VLVVGAGYVSLEVLEN) lines the NADP(+) pocket. 267 to 277 (TNVPNIYAIGD) is a binding site for FAD. A substrate-binding site is contributed by histidine 299. Tyrosine 419 provides a ligand contact to FAD. Lysine 427 contributes to the substrate binding site.

The protein belongs to the class-III pyridine nucleotide-disulfide oxidoreductase family. As to quaternary structure, homodimer. FAD serves as cofactor.

It carries out the reaction NADP(+) + 2 CoA = CoA-disulfide + NADPH + H(+). Functionally, catalyzes specifically the NADPH-dependent reduction of coenzyme A disulfide. In Staphylococcus aureus (strain USA300), this protein is Coenzyme A disulfide reductase.